The chain runs to 114 residues: Ferredoxin (114 aa).

Cys-9 and Cys-17 together coordinate [3Fe-4S] cluster. [4Fe-4S] cluster-binding residues include Cys-21, Cys-40, Cys-43, and Cys-46. The 30-residue stretch at 31 to 60 folds into the 4Fe-4S ferredoxin-type domain; that stretch reads RMLYINPDECVDCGACKPACRVEAIYWEGD. Position 50 (Cys-50) interacts with [3Fe-4S] cluster.

The cofactor is [4Fe-4S] cluster. [3Fe-4S] cluster serves as cofactor.

Its function is as follows. Ferredoxins are iron-sulfur proteins that transfer electrons in a wide variety of metabolic reactions. This is Ferredoxin (fdxA) from Mycobacterium tuberculosis (strain ATCC 25618 / H37Rv).